A 361-amino-acid polypeptide reads, in one-letter code: MAGNSIGQHFRVTTFGESHGLALGCIVDGCPPGLELTEADLQVDLDRRKPGTSKYTTQRREADEVKILSGVFEGKTTGTSIGLLIENTDQRSKDYSEIKDKFRPGHADYTYHQKYGQRDYRGGGRSSARETAMRVAAGAVAKKYLKQEFGIEIRAYLSQMGDVSIDSVDWNEIENNAFFCPDASKVDAFDELIRKLKKEGDSIGAKITVVAQGVPVGLGEPVFARLDADVAHALMGINAVKGVEIGDGFEVVNQRGSEHRDPLTPEGFSSNHAGGILGGISSGQDIVAHIALKPTSSITVPGETITRSGEKTELITKGRHDPCVGIRAVPIAEAMLAIVVMDHLVRHRGQNFGVQTETPKI.

Arg48 is an NADP(+) binding site. Residues Arg125–Ser127, Asn238–Ala239, Gly278, Lys293–Ser297, and Arg319 contribute to the FMN site.

Belongs to the chorismate synthase family. In terms of assembly, homotetramer. FMNH2 is required as a cofactor.

It catalyses the reaction 5-O-(1-carboxyvinyl)-3-phosphoshikimate = chorismate + phosphate. It participates in metabolic intermediate biosynthesis; chorismate biosynthesis; chorismate from D-erythrose 4-phosphate and phosphoenolpyruvate: step 7/7. Catalyzes the anti-1,4-elimination of the C-3 phosphate and the C-6 proR hydrogen from 5-enolpyruvylshikimate-3-phosphate (EPSP) to yield chorismate, which is the branch point compound that serves as the starting substrate for the three terminal pathways of aromatic amino acid biosynthesis. This reaction introduces a second double bond into the aromatic ring system. This is Chorismate synthase from Aliivibrio fischeri (strain MJ11) (Vibrio fischeri).